A 629-amino-acid polypeptide reads, in one-letter code: Putrebactin synthase (629 aa).

The protein belongs to the IucA/IucC family. Homodimer.

It catalyses the reaction 2 N-(3-carboxypropanoyl)-N-hydroxyputrescine + 2 ATP = putrebactin + 2 AMP + 2 diphosphate + 2 H(+). The catalysed reaction is 2 N-(3-carboxypropanoyl)-N-hydroxyputrescine + ATP = pre-putrebactin + AMP + diphosphate + H(+). It carries out the reaction pre-putrebactin + ATP = putrebactin + AMP + diphosphate + H(+). It functions in the pathway siderophore biosynthesis. Requires Mg(2+) for activity. In terms of biological role, ligase involved in the biosynthesis of the siderophore putrebactin. Catalyzes the ATP-dependent head-to-tail dimerization of N-hydroxy-N-succinyl-putrescine (HSP) to give pre-putrebactin and subsequent macrocyclization of pre-putrebactin to give putrebactin. The sequence is that of Putrebactin synthase from Shewanella sp. (strain MR-4).